Here is a 348-residue protein sequence, read N- to C-terminus: Phosphate acyltransferase (348 aa).

Belongs to the PlsX family. In terms of assembly, homodimer. Probably interacts with PlsY.

It is found in the cytoplasm. It carries out the reaction a fatty acyl-[ACP] + phosphate = an acyl phosphate + holo-[ACP]. Its pathway is lipid metabolism; phospholipid metabolism. Its function is as follows. Catalyzes the reversible formation of acyl-phosphate (acyl-PO(4)) from acyl-[acyl-carrier-protein] (acyl-ACP). This enzyme utilizes acyl-ACP as fatty acyl donor, but not acyl-CoA. In Rhizobium rhizogenes (strain K84 / ATCC BAA-868) (Agrobacterium radiobacter), this protein is Phosphate acyltransferase.